Reading from the N-terminus, the 617-residue chain is Dihydroxy-acid dehydratase (617 aa).

Aspartate 81 is a binding site for Mg(2+). Cysteine 122 lines the [2Fe-2S] cluster pocket. Positions 123 and 124 each coordinate Mg(2+). Lysine 124 carries the post-translational modification N6-carboxylysine. [2Fe-2S] cluster is bound at residue cysteine 195. Glutamate 492 is a binding site for Mg(2+). Catalysis depends on serine 518, which acts as the Proton acceptor.

It belongs to the IlvD/Edd family. Homodimer. Requires [2Fe-2S] cluster as cofactor. Mg(2+) serves as cofactor.

It catalyses the reaction (2R)-2,3-dihydroxy-3-methylbutanoate = 3-methyl-2-oxobutanoate + H2O. The enzyme catalyses (2R,3R)-2,3-dihydroxy-3-methylpentanoate = (S)-3-methyl-2-oxopentanoate + H2O. It participates in amino-acid biosynthesis; L-isoleucine biosynthesis; L-isoleucine from 2-oxobutanoate: step 3/4. It functions in the pathway amino-acid biosynthesis; L-valine biosynthesis; L-valine from pyruvate: step 3/4. In terms of biological role, functions in the biosynthesis of branched-chain amino acids. Catalyzes the dehydration of (2R,3R)-2,3-dihydroxy-3-methylpentanoate (2,3-dihydroxy-3-methylvalerate) into 2-oxo-3-methylpentanoate (2-oxo-3-methylvalerate) and of (2R)-2,3-dihydroxy-3-methylbutanoate (2,3-dihydroxyisovalerate) into 2-oxo-3-methylbutanoate (2-oxoisovalerate), the penultimate precursor to L-isoleucine and L-valine, respectively. This Azorhizobium caulinodans (strain ATCC 43989 / DSM 5975 / JCM 20966 / LMG 6465 / NBRC 14845 / NCIMB 13405 / ORS 571) protein is Dihydroxy-acid dehydratase.